The chain runs to 110 residues: UPF0122 protein lin1916 (110 aa).

The protein belongs to the UPF0122 family.

Functionally, might take part in the signal recognition particle (SRP) pathway. This is inferred from the conservation of its genetic proximity to ftsY/ffh. May be a regulatory protein. This is UPF0122 protein lin1916 from Listeria innocua serovar 6a (strain ATCC BAA-680 / CLIP 11262).